We begin with the raw amino-acid sequence, 125 residues long: MALKDTAKKMTDLLESIQQNLLKAEKGNKAAAQRVRTESIKLEKIAKVYRKESIKAEKMGLMKKSKAAAKKAKAAAKKPVRAAKTVAKKACTKRTCATKAKVKPTKKAAPKTKVKTAKKTRSTKK.

A disordered region spans residues 98 to 125 (TKAKVKPTKKAAPKTKVKTAKKTRSTKK). Positions 100-125 (AKVKPTKKAAPKTKVKTAKKTRSTKK) are enriched in basic residues.

This sequence belongs to the histone H1/H5 family. HCT subfamily.

Might have a role analogous to that of eukaryotic histone proteins. This Chlamydia trachomatis serovar D (strain ATCC VR-885 / DSM 19411 / UW-3/Cx) protein is Histone H1-like protein Hc1 (hctA).